Reading from the N-terminus, the 324-residue chain is Olfactory receptor 6K2 (324 aa).

At 1–25 (MESPNRTTIQEFIFSAFPYSWVKSV) the chain is on the extracellular side. N5 carries N-linked (GlcNAc...) asparagine glycosylation. The helical transmembrane segment at 26-46 (VCFVPLLFIYAFIVVGNLVII) threads the bilayer. The Cytoplasmic segment spans residues 47-54 (TVVQLNTH). The chain crosses the membrane as a helical span at residues 55 to 75 (LHTPMYTFISALSFLEIWYTT). Residues 76–98 (ATIPKMLSSLLSERSISFNGCLL) are Extracellular-facing. A disulfide bond links C96 and C188. A helical membrane pass occupies residues 99–119 (QMYFFHSTGICEVCLLTVMAF). Over 120-138 (DHYLAICSPLHYPSIMTPK) the chain is Cytoplasmic. A helical membrane pass occupies residues 139 to 159 (LCTQLTLSCCVCGFITPLPEI). Topologically, residues 160-198 (AWISTLPFCGSNHLEHIFCDFLPVLRLACTDTRAIVMIQ) are extracellular. The helical transmembrane segment at 199-218 (VVDVIHAVEIITAVMLIFMS) threads the bilayer. The Cytoplasmic segment spans residues 219–238 (YDGIVAVILRIHSAGGRRTA). A helical membrane pass occupies residues 239 to 259 (FSTCVSHFIVFSLFFGSVTLM). The Extracellular segment spans residues 260–272 (YLRFSATYSLFWD). The chain crosses the membrane as a helical span at residues 273-293 (IAIALAFAVLSPFFNPIIYSL). The Cytoplasmic portion of the chain corresponds to 294–324 (RNKEIKEAIKKHIGQAKIFFSVRPGTSSKIF).

The protein belongs to the G-protein coupled receptor 1 family.

Its subcellular location is the cell membrane. Odorant receptor. This chain is Olfactory receptor 6K2 (OR6K2), found in Homo sapiens (Human).